Reading from the N-terminus, the 235-residue chain is Probable deoxycytidine kinase FPV151 (235 aa).

Residue 30–38 (GNISAGKST) participates in ATP binding. Residues Glu53, Tyr68, and Gln79 each coordinate substrate. The Proton acceptor role is filled by Glu104. Substrate is bound by residues Arg105, Asp110, and Glu172.

It belongs to the DCK/DGK family.

It carries out the reaction 2'-deoxycytidine + a ribonucleoside 5'-triphosphate = dCMP + a ribonucleoside 5'-diphosphate + H(+). This Vertebrata (FPV) protein is Probable deoxycytidine kinase FPV151.